The chain runs to 367 residues: Cystinosin (367 aa).

An N-terminal signal peptide occupies residues 1–22 (MRRNWLLILTLFLLMFIEKYES). Topologically, residues 23 to 125 (TVSLTAPPTV…LVIHSRIVSI (103 aa)) are lumenal. Asparagine 36, asparagine 51, asparagine 66, asparagine 84, asparagine 104, and asparagine 107 each carry an N-linked (GlcNAc...) asparagine glycan. The PQ-loop 1 domain maps to 123 to 189 (VSIINQVIGW…LLWVPYIQEE (67 aa)). A helical membrane pass occupies residues 126 to 150 (INQVIGWIYFMAWSVSFYPQVIQNW). Topologically, residues 151 to 159 (RRKSVIGLS) are cytoplasmic. Residues 160-179 (FDFLALNLTGFVAYSVFNIG) traverse the membrane as a helical segment. Asparagine 166 is a binding site for L-cystine. The Lumenal segment spans residues 180 to 202 (LLWVPYIQEEFLLKYPNGVNPVD). The chain crosses the membrane as a helical span at residues 203–225 (SNDAFFSLHAVALTLIVILQCCL). Aspartate 205 contacts H(+). At 226–234 (YERGNQRVS) the chain is on the cytoplasmic side. A helical transmembrane segment spans residues 235 to 257 (WPSIGFLVLAWLFVLVTMIVAAV). At 258–263 (GITTWL) the chain is on the lumenal side. Residues 263 to 328 (LQFLFCFSYI…QSYNNDQWTL (66 aa)) enclose the PQ-loop 2 domain. The chain crosses the membrane as a helical span at residues 264-289 (QFLFCFSYIKLIITLIKYFPQAYMNF). Residues lysine 273, lysine 280, and tyrosine 281 each coordinate L-cystine. Over 290–298 (YYKSTKGWS) the chain is Cytoplasmic. The helical transmembrane segment at 299–308 (IGGVLLDFTG) threads the bilayer. L-cystine is bound at residue aspartate 305. Aspartate 305 is a binding site for H(+). At 309–331 (GSFSLLQMFLQSYNNDQWTLIFG) the chain is on the lumenal side. Residues 332–354 (DPTKFGLGVFTIFFDVVFFIQHF) traverse the membrane as a helical segment. Residue aspartate 346 coordinates H(+). The Cytoplasmic segment spans residues 355-367 (YLYRKKPGYDQLN). A Lysosomal targeting motif motif is present at residues 362 to 366 (GYDQL).

This sequence belongs to the cystinosin family. In terms of assembly, interacts with components of the V-ATPase complex. Interacts with components of the Ragulator complex. Interacts with RRAGA/RagA and RRAGC/RagC. Interacts with AP-3 complex subunit mu (AP3M1 or AP3M2).

It localises to the lysosome membrane. Its subcellular location is the melanosome membrane. The enzyme catalyses L-cystine(out) + H(+)(out) = L-cystine(in) + H(+)(in). With respect to regulation, switches between a lumen- and a cytosol-open conformation: pH induces conformational changes and shifts the equilibrium to facilitate the transition between the lumen- and cytosol-open conformation, thereby promoting cystine transport. Protonation of specific aspartate residues (Asp-205, Asp-305 and Asp-346) favors the cytosol-open conformation. Its function is as follows. Cystine/H(+) symporter that mediates export of cystine, the oxidized dimer of cysteine, from lysosomes. Plays an important role in melanin synthesis by catalyzing cystine export from melanosomes, possibly by inhibiting pheomelanin synthesis. In addition to cystine export, also acts as a positive regulator of mTORC1 signaling in kidney proximal tubular cells, via interactions with components of the v-ATPase and Ragulator complexes. Also involved in small GTPase-regulated vesicle trafficking and lysosomal localization of LAMP2A, independently of cystine transporter activity. This is Cystinosin from Mus musculus (Mouse).